The primary structure comprises 143 residues: MAETSNVLRVNIVTPDGLVYDHHARMLVVHSVAGELGIMANHEPIVTPLEIGEVDVQRVDASDHNDSIAVNGGFMEVSENVASIVADSAERERDIDLSRAQAARDRAQKRIAQAKNDHNQDDLRRAQVALRRAINRINVKTSH.

The protein belongs to the ATPase epsilon chain family. In terms of assembly, F-type ATPases have 2 components, CF(1) - the catalytic core - and CF(0) - the membrane proton channel. CF(1) has five subunits: alpha(3), beta(3), gamma(1), delta(1), epsilon(1). CF(0) has three main subunits: a, b and c.

The protein resides in the cell membrane. Functionally, produces ATP from ADP in the presence of a proton gradient across the membrane. This Lacticaseibacillus casei (strain BL23) (Lactobacillus casei) protein is ATP synthase epsilon chain.